The sequence spans 417 residues: NADH-quinone oxidoreductase subunit D (417 aa).

This sequence belongs to the complex I 49 kDa subunit family. As to quaternary structure, NDH-1 is composed of 14 different subunits. Subunits NuoB, C, D, E, F, and G constitute the peripheral sector of the complex.

It localises to the cell inner membrane. The enzyme catalyses a quinone + NADH + 5 H(+)(in) = a quinol + NAD(+) + 4 H(+)(out). NDH-1 shuttles electrons from NADH, via FMN and iron-sulfur (Fe-S) centers, to quinones in the respiratory chain. The immediate electron acceptor for the enzyme in this species is believed to be ubiquinone. Couples the redox reaction to proton translocation (for every two electrons transferred, four hydrogen ions are translocated across the cytoplasmic membrane), and thus conserves the redox energy in a proton gradient. The sequence is that of NADH-quinone oxidoreductase subunit D from Burkholderia cenocepacia (strain HI2424).